The chain runs to 302 residues: Surfeit locus protein 4 homolog (302 aa).

A run of 6 helical transmembrane segments spans residues 95 to 115 (APLL…LVVF), 120 to 140 (AYAI…YGLI), 193 to 213 (VLLI…ISWT), 215 to 235 (ILVH…FKAK), 236 to 256 (FFAA…NSFW), and 271 to 291 (DFFQ…TGPG). The Di-lysine motif motif lies at 299 to 302 (KKIY).

It belongs to the SURF4 family.

The protein resides in the endoplasmic reticulum membrane. The polypeptide is Surfeit locus protein 4 homolog (Schizosaccharomyces pombe (strain 972 / ATCC 24843) (Fission yeast)).